The following is a 240-amino-acid chain: Intestine-specific homeobox (240 aa).

Residues 36-82 (PTERRSLPRPQSICKEDSRQTTIPGSKLERPPQDQPQEEKKNKRRVR) form a disordered region. Basic and acidic residues predominate over residues 62-76 (KLERPPQDQPQEEKK). A DNA-binding region (homeobox) is located at residues 78 to 137 (KRRVRTTFTTEQLQELEKLFHFTHYPDIHVRSQLASRINLPEARVQIWFQNQRAKWRKQE).

In terms of tissue distribution, expressed in intestinal epithelial cells from the duodenum to the proximal colon.

It localises to the nucleus. In terms of biological role, transcription factor that regulates gene expression in intestine. May participate in vitamin A metabolism most likely by regulating BCO1 expression in the intestine. The sequence is that of Intestine-specific homeobox (Isx) from Mus musculus (Mouse).